A 162-amino-acid chain; its full sequence is UPF0303 protein RL3365 (162 aa).

Belongs to the UPF0303 family.

This chain is UPF0303 protein RL3365, found in Rhizobium johnstonii (strain DSM 114642 / LMG 32736 / 3841) (Rhizobium leguminosarum bv. viciae).